The chain runs to 90 residues: Protein P18 (90 aa).

Helical transmembrane passes span 1–21 (MPFG…RDTL), 37–57 (GFGY…IKPI), and 60–80 (PVNA…RGAI).

The protein localises to the virion membrane. Its function is as follows. Component of the phage injection machinery. Required for DNA injection in the membrane transformation event. Involved in the formation of the membrane tail tube to connect the virus interior with the host cytosol. Essential for viral infectivity. In Acinetobacter calcoaceticus (Arthrobacter siderocapsulatus), this protein is Protein P18 (XVIII).